A 421-amino-acid polypeptide reads, in one-letter code: Putative hydro-lyase KRH_21160 (421 aa).

2 disordered regions span residues 200 to 298 and 312 to 421; these read TWGH…SPVT and TRAG…AVSR. Positions 224–237 are enriched in basic residues; that stretch reads GSRRRPRWWSRLRR. 2 stretches are compositionally biased toward low complexity: residues 243–260 and 370–380; these read PRAT…TRCP and SRGPGPCPRAA.

It belongs to the D-glutamate cyclase family.

The polypeptide is Putative hydro-lyase KRH_21160 (Kocuria rhizophila (strain ATCC 9341 / DSM 348 / NBRC 103217 / DC2201)).